The following is a 374-amino-acid chain: AA14 family lytic polysaccharide monooxygenase B (374 aa).

An N-terminal signal peptide occupies residues 1 to 18 (MIPVFLAAIAVFLPLTSG). N-linked (GlcNAc...) asparagine glycans are attached at residues Asn31, Asn49, Asn94, and Asn151. 5 disulfide bridges follow: Cys85/Cys108, Cys127/Cys154, Cys171/Cys176, Cys178/Cys200, and Cys220/Cys236. N-linked (GlcNAc...) asparagine glycosylation is found at Asn235 and Asn315. A disordered region spans residues 306–374 (ISNATPAPSN…TQSRKMRYVF (69 aa)). Residues 313 to 344 (PSNGSCSSRPPSSPVSSSAASTTTSRSPRPSA) are compositionally biased toward low complexity.

It belongs to the polysaccharide monooxygenase AA14 family. It depends on Cu(2+) as a cofactor.

It is found in the secreted. Its function is as follows. Lytic polysaccharide monooxygenase (LPMO) that oxidatively cleaves xylan with both C1 and C4 regioselectivity and that specifically targets the protective shield made by heteroxylans that cover cellulose microfibrils in wood. Catalysis by LPMOs requires the reduction of the active-site copper from Cu(II) to Cu(I) by a reducing agent and H(2)O(2) or O(2) as a cosubstrate. Cleavage occurs only when xylans are bound to cellulose and not when they are in solution. Increases the efficiency of wood saccharification through oxidative cleavage of highly refractory xylan-coated cellulose fibers via synergistic relationship with xylan-active enzymes, xylobiohydrolases and cellobiohydrolases. The polypeptide is AA14 family lytic polysaccharide monooxygenase B (Pycnoporus cinnabarinus (Cinnabar-red polypore)).